A 209-amino-acid chain; its full sequence is Putative thymidylate synthase (209 aa).

Cys137 is a catalytic residue.

Belongs to the thymidylate synthase family. Archaeal-type ThyA subfamily. As to quaternary structure, monomer.

It is found in the cytoplasm. The protein operates within pyrimidine metabolism; dTTP biosynthesis. Its function is as follows. May catalyze the biosynthesis of dTMP using an unknown cosubstrate. This chain is Putative thymidylate synthase, found in Methanopyrus kandleri (strain AV19 / DSM 6324 / JCM 9639 / NBRC 100938).